Consider the following 305-residue polypeptide: MLETRSGYKSGFISIIGRPNVGKSTFLNRVIGQKIAIMSDKPQTTRNKVQGVLTTTDSQMIFIDTPGIHKPKHKLGDFMLKVAKNTLREVDVIMFMVNAEQKLGKGDEFILEMLAGNSTPVFLVINKIDQIHPDELLGIIESYKERYEFAEIIPISALQGNNVESLLDTLPKYLPEGPQYYPADQVTDHPERFIIYELIREKVLHLTREEIPHSIAVVIDKIRRDEENNDKIHVAATIMVERDSQKGIVIGKRGALLKEVGTRARKDIEMLLGSKVYLELWVKVQKDWRNKSTHLRDFGFRDDEY.

The 168-residue stretch at 9–176 folds into the Era-type G domain; that stretch reads KSGFISIIGR…LDTLPKYLPE (168 aa). A G1 region spans residues 17–24; the sequence is GRPNVGKS. 17-24 is a GTP binding site; it reads GRPNVGKS. The interval 43-47 is G2; it reads QTTRN. The interval 64–67 is G3; the sequence is DTPG. Residues 64-68 and 126-129 contribute to the GTP site; these read DTPGI and NKID. Positions 126–129 are G4; that stretch reads NKID. A G5 region spans residues 155–157; that stretch reads ISA. In terms of domain architecture, KH type-2 spans 207-286; that stretch reads TREEIPHSIA…YLELWVKVQK (80 aa).

Belongs to the TRAFAC class TrmE-Era-EngA-EngB-Septin-like GTPase superfamily. Era GTPase family. As to quaternary structure, monomer.

Its subcellular location is the cytoplasm. It localises to the cell membrane. In terms of biological role, an essential GTPase that binds both GDP and GTP, with rapid nucleotide exchange. Plays a role in 16S rRNA processing and 30S ribosomal subunit biogenesis and possibly also in cell cycle regulation and energy metabolism. The polypeptide is GTPase Era (Lysinibacillus sphaericus (strain C3-41)).